The sequence spans 804 residues: Protein SEY1 homolog 1 (804 aa).

Topologically, residues 1–638 (MEQIITGEGQ…SVLASQNNEH (638 aa)) are cytoplasmic. Positions 28 to 245 (GTDYHMVSII…EENYLFKEKS (218 aa)) constitute a GB1/RHD3-type G domain. 38–45 (GCQSSGKS) serves as a coordination point for GTP. The chain crosses the membrane as a helical span at residues 639–659 (IPPWAWFLFLFSCSDYILWWL). Residues 660 to 662 (SNP) lie on the Lumenal side of the membrane. The helical transmembrane segment at 663-683 (LLFSLTVLFGGTYLVLNQLGL) threads the bilayer. Topologically, residues 684 to 804 (WDTAVQKLLD…RKRVRVGTLV (121 aa)) are cytoplasmic. A disordered region spans residues 706-804 (PDENNETETN…RKRVRVGTLV (99 aa)). The segment covering 751-791 (QGLTKTESNVTFANVSNANDEQSLTKNNTEDSLNTGSSSSG) has biased composition (polar residues). Positions 792 to 804 (QRHRKRVRVGTLV) are enriched in basic residues.

Belongs to the TRAFAC class dynamin-like GTPase superfamily. GB1/RHD3 GTPase family. RHD3 subfamily.

It localises to the endoplasmic reticulum membrane. Functionally, probable GTP-binding protein that may be involved in cell development. This chain is Protein SEY1 homolog 1, found in Trichomonas vaginalis (strain ATCC PRA-98 / G3).